The chain runs to 152 residues: SsrA-binding protein (152 aa).

A disordered region spans residues 124–152 (KKLHDKRDTAAERDWQRDKARLMKGDRGD). Positions 128-152 (DKRDTAAERDWQRDKARLMKGDRGD) are enriched in basic and acidic residues.

The protein belongs to the SmpB family.

It is found in the cytoplasm. Functionally, required for rescue of stalled ribosomes mediated by trans-translation. Binds to transfer-messenger RNA (tmRNA), required for stable association of tmRNA with ribosomes. tmRNA and SmpB together mimic tRNA shape, replacing the anticodon stem-loop with SmpB. tmRNA is encoded by the ssrA gene; the 2 termini fold to resemble tRNA(Ala) and it encodes a 'tag peptide', a short internal open reading frame. During trans-translation Ala-aminoacylated tmRNA acts like a tRNA, entering the A-site of stalled ribosomes, displacing the stalled mRNA. The ribosome then switches to translate the ORF on the tmRNA; the nascent peptide is terminated with the 'tag peptide' encoded by the tmRNA and targeted for degradation. The ribosome is freed to recommence translation, which seems to be the essential function of trans-translation. This chain is SsrA-binding protein, found in Caulobacter vibrioides (strain ATCC 19089 / CIP 103742 / CB 15) (Caulobacter crescentus).